Here is a 301-residue protein sequence, read N- to C-terminus: Probable alpha-L-glutamate ligase 1 (301 aa).

One can recognise an ATP-grasp domain in the interval 104–287 (LQLLSRKGIG…VTEPIVEYIE (184 aa)). ATP is bound by residues K141, 178–179 (EY), D187, and 211–213 (RSN). Mg(2+) is bound by residues D248, E260, and N262. Residues D248, E260, and N262 each coordinate Mn(2+).

Belongs to the RimK family. It depends on Mg(2+) as a cofactor. The cofactor is Mn(2+).

The sequence is that of Probable alpha-L-glutamate ligase 1 from Shewanella sp. (strain MR-4).